We begin with the raw amino-acid sequence, 209 residues long: Cytidylate kinase (209 aa).

7-15 (GPAASGKGT) is a binding site for ATP.

The protein belongs to the cytidylate kinase family. Type 1 subfamily.

The protein localises to the cytoplasm. The catalysed reaction is CMP + ATP = CDP + ADP. It catalyses the reaction dCMP + ATP = dCDP + ADP. This Afipia carboxidovorans (strain ATCC 49405 / DSM 1227 / KCTC 32145 / OM5) (Oligotropha carboxidovorans) protein is Cytidylate kinase.